The primary structure comprises 644 residues: Adhesion G-protein coupled receptor F2 (644 aa).

The signal sequence occupies residues 1–18 (MIPAHWLYCLMLLLPIES). The Extracellular segment spans residues 19-386 (CRILCQASSK…ESPVLTYITY (368 aa)). 4 N-linked (GlcNAc...) asparagine glycosylation sites follow: Asn155, Asn219, Asn293, and Asn311. The GAIN-B domain maps to 233 to 377 (SRGSLGKNFT…SILMSPNTLE (145 aa)). Intrachain disulfides connect Cys329-Cys356 and Cys344-Cys358. Positions 329-377 (CVGWHSLESRWDWRACKTIQENSRQAVCRCRPNKLYTSFSILMSPNTLE) are GPS. A helical transmembrane segment spans residues 387–407 (IGLGISICSLIICLAIEVLVW). Residues 408-422 (SQVTKTEISYLRHLC) are Cytoplasmic-facing. The helical transmembrane segment at 423–443 (IANIAATLLMADAWFIVASFL) threads the bilayer. Topologically, residues 444–465 (SGPVLHHNGCVAATFFVHFFYL) are extracellular. A helical transmembrane segment spans residues 466-486 (SVFFWMLAKALLILYGILIVF). Topologically, residues 487-493 (HTLPKSC) are cytoplasmic. A helical membrane pass occupies residues 494–514 (LVASLFSVGYGCPLVIAIITL). Residues 515–541 (AVTEPGKGYLRPEACWLNWDMTKALLA) are Extracellular-facing. The chain crosses the membrane as a helical span at residues 542–562 (FVVPALAIVVVNLITVTMVII). At 563 to 585 (KTQRAAIGSSMFQEVRAIVRICK) the chain is on the cytoplasmic side. Residues 586-606 (NIAILTPLLGLTWGFGIATVI) form a helical membrane-spanning segment. Residues 607-610 (NGHS) are Extracellular-facing. The chain crosses the membrane as a helical span at residues 611–631 (LAFHIIFSLLNALQVSPDAAV).

Belongs to the G-protein coupled receptor 2 family. Adhesion G-protein coupled receptor (ADGR) subfamily. In terms of tissue distribution, mainly expressed in skin and heart, and very weakly in lung and spleen. Detected in all epidermal layers of skin.

Its subcellular location is the membrane. Its function is as follows. Orphan receptor. The chain is Adhesion G-protein coupled receptor F2 (Adgrf2) from Mus musculus (Mouse).